Consider the following 786-residue polypeptide: Cas scaffolding protein family member 4 (786 aa).

In terms of domain architecture, SH3 spans 11-73 (PKALLARALY…PANRLQILTE (63 aa)). A phosphoserine mark is found at S200 and S249. The segment at 262 to 295 (SFAEESRPHALPSSSSTFYNPPSGRSRSLTPQLN) is disordered. Residues 273 to 295 (PSSSSTFYNPPSGRSRSLTPQLN) show a composition bias toward polar residues. A Phosphoserine modification is found at S305. Disordered regions lie at residues 361 to 429 (QAGK…SEES) and 612 to 670 (IQPP…ERKP). A compositionally biased stretch (basic and acidic residues) spans 364–373 (KELEKAKEVS). Residues 374–391 (ENSAGHNSSWFSRRTTSP) show a composition bias toward polar residues. 2 positions are modified to phosphoserine: S376 and S390. Over residues 399-427 (SGSSSDSRASIVSSCSTTSTDDSSSSSSE) the composition is skewed to low complexity. Over residues 630 to 642 (KQREDEHSSELLK) the composition is skewed to basic and acidic residues.

The protein belongs to the CAS family. As to quaternary structure, interacts (via SH3 domain) with PTK2/FAK1 (via C-terminus). Phosphorylated on tyrosines by SRC. In terms of tissue distribution, expressed abundantly in lung and spleen. Also highly expressed in ovarian and leukemia cell lines.

The protein localises to the cytoplasm. The protein resides in the cytoskeleton. It localises to the cell junction. It is found in the focal adhesion. Functionally, docking protein that plays a role in tyrosine kinase-based signaling related to cell adhesion and cell spreading. Regulates PTK2/FAK1 activity, focal adhesion integrity, and cell spreading. This is Cas scaffolding protein family member 4 (CASS4) from Homo sapiens (Human).